The following is a 466-amino-acid chain: Purple acid phosphatase 6 (466 aa).

Positions Met-1 to Gly-20 are cleaved as a signal peptide. N-linked (GlcNAc...) asparagine glycosylation occurs at Asn-88. Residue Asp-164 coordinates Fe cation. The N-linked (GlcNAc...) asparagine glycan is linked to Asn-172. 2 residues coordinate Fe cation: Asp-192 and Tyr-195. Residue Asp-192 participates in Zn(2+) binding. Zn(2+) contacts are provided by Asn-229 and His-314. Residue Asn-229 participates in substrate binding. His-324 functions as the Proton donor in the catalytic mechanism. Position 351 (His-351) interacts with Zn(2+). His-351–His-353 contacts substrate. His-353 is a Fe cation binding site. N-linked (GlcNAc...) asparagine glycans are attached at residues Asn-367 and Asn-424.

The protein belongs to the metallophosphoesterase superfamily. Purple acid phosphatase family. Homodimer. Requires Fe cation as cofactor. The cofactor is Zn(2+). As to expression, specifically expressed in flowers.

The protein localises to the secreted. The enzyme catalyses a phosphate monoester + H2O = an alcohol + phosphate. This is Purple acid phosphatase 6 (PAP6) from Arabidopsis thaliana (Mouse-ear cress).